Consider the following 218-residue polypeptide: Large ribosomal subunit protein uL3 (218 aa).

2 disordered regions span residues 128 to 167 (FSRG…RMGG) and 199 to 218 (SLLN…QGGK).

This sequence belongs to the universal ribosomal protein uL3 family. In terms of assembly, part of the 50S ribosomal subunit. Forms a cluster with proteins L14 and L19.

Its function is as follows. One of the primary rRNA binding proteins, it binds directly near the 3'-end of the 23S rRNA, where it nucleates assembly of the 50S subunit. The polypeptide is Large ribosomal subunit protein uL3 (Prochlorococcus marinus (strain NATL2A)).